The sequence spans 293 residues: Glycine N-methyltransferase (293 aa).

The residue at position 2 (Val-2) is an N-acetylvaline. (6S)-5-methyl-5,6,7,8-tetrahydrofolate is bound by residues Ser-4 and Tyr-6. Ser-10 carries the post-translational modification Phosphoserine. 4 residues coordinate S-adenosyl-L-methionine: Tyr-22, Trp-31, Tyr-34, and Arg-41. The residue at position 34 (Tyr-34) is a Phosphotyrosine. Lys-46 is subject to N6-succinyllysine. S-adenosyl-L-methionine-binding positions include Ala-65, 86-88 (DAS), 117-118 (NW), Leu-137, 137-140 (LGNS), and Arg-176. Lys-191, Lys-196, and Lys-201 each carry N6-succinyllysine. Residue His-215 coordinates (6S)-5-methyl-5,6,7,8-tetrahydrofolate. Tyr-221 lines the S-adenosyl-L-methionine pocket. Arg-240 lines the (6S)-5-methyl-5,6,7,8-tetrahydrofolate pocket.

This sequence belongs to the class I-like SAM-binding methyltransferase superfamily. Glycine N-methyltransferase family. Homotetramer.

Its subcellular location is the cytoplasm. It carries out the reaction glycine + S-adenosyl-L-methionine = sarcosine + S-adenosyl-L-homocysteine + H(+). Inhibited by 5-methyltetrahydrofolate monoglutamate and by 5-methyltetrahydrofolate pentaglutamate, inhibition is much more effective by the pentaglutamate form than by the monoglutamate form. Two molecules of 5-methyltetrahydrofolate are bound per tetramer. The binding sites are localized between subunits. Inhibitor binding may preclude movements of the polypeptide chain that are necessary for enzyme activity. Functionally, catalyzes the methylation of glycine by using S-adenosylmethionine (AdoMet) to form N-methylglycine (sarcosine) with the concomitant production of S-adenosylhomocysteine (AdoHcy), a reaction regulated by the binding of 5-methyltetrahydrofolate. Plays an important role in the regulation of methyl group metabolism by regulating the ratio between S-adenosyl-L-methionine and S-adenosyl-L-homocysteine. This Mus musculus (Mouse) protein is Glycine N-methyltransferase (Gnmt).